The primary structure comprises 72 residues: Translation initiation factor IF-1 (72 aa).

Positions 2–72 (AKEDVIEVEG…TRGRITYRYK (71 aa)) constitute an S1-like domain. Tyr-60 carries the post-translational modification Phosphotyrosine.

This sequence belongs to the IF-1 family. As to quaternary structure, component of the 30S ribosomal translation pre-initiation complex which assembles on the 30S ribosome in the order IF-2 and IF-3, IF-1 and N-formylmethionyl-tRNA(fMet); mRNA recruitment can occur at any time during PIC assembly.

It localises to the cytoplasm. Its function is as follows. One of the essential components for the initiation of protein synthesis. Stabilizes the binding of IF-2 and IF-3 on the 30S subunit to which N-formylmethionyl-tRNA(fMet) subsequently binds. Helps modulate mRNA selection, yielding the 30S pre-initiation complex (PIC). Upon addition of the 50S ribosomal subunit IF-1, IF-2 and IF-3 are released leaving the mature 70S translation initiation complex. This chain is Translation initiation factor IF-1, found in Halalkalibacterium halodurans (strain ATCC BAA-125 / DSM 18197 / FERM 7344 / JCM 9153 / C-125) (Bacillus halodurans).